Reading from the N-terminus, the 474-residue chain is MNKNKNIGIILAGGVGSRMGLGYPKQFSKIAGKTALEHTLAIFQEHKEIDEIIIVSERTSYRRIEDIVSKLDFSKVNRIIFGGKERSDSTLSAITALQDEPENTKLIIHDAVRPLLATEIISECIAKLDKYNAVDVAIPAVDTIVHVNNDTQEIIKIPKRAEYYQGQTPQAFKLGTLKKAYDIYTQGGIEGTCDCSIVLKTLPEERVGIVSGSETNIKLTRPVDLFIADKLFQSRSHFSLRNITSIDRLYDMKDQVLVVIGGSYGIGAHIIDIAKKFGIKTYSLSRSNGVDVGDVKSIEKAFAEIYAKEHKIDHIVNTAAVLNHKTLVSMSYEEILTSINVNYTGMINAVITAYPYLKQTHGSFLGFTSSSYTRGRPFYAIYSSAKAAVVNLTQAISEEWLPDNIKINCVNPERTKTPMRTKAFGIEPEGTLLDAKTVAFASLVVLASRETGNIIDVVLKDEEYITNILADLYK.

The interval 1-238 (MNKNKNIGII…DKLFQSRSHF (238 aa)) is ribitol-5-phosphate cytidylyltransferase. Residues 250–474 (YDMKDQVLVV…ITNILADLYK (225 aa)) are ribulose-5-phosphate reductase.

This sequence in the N-terminal section; belongs to the IspD/TarI cytidylyltransferase family. The protein in the C-terminal section; belongs to the short-chain dehydrogenases/reductases (SDR) family. Monomer.

It carries out the reaction D-ribitol 5-phosphate + CTP + H(+) = CDP-L-ribitol + diphosphate. The enzyme catalyses D-ribitol 5-phosphate + NADP(+) = D-ribulose 5-phosphate + NADPH + H(+). It functions in the pathway capsule biogenesis; capsule polysaccharide biosynthesis. Functionally, catalyzes the NADPH-dependent reduction of D-ribulose 5-phosphate to D-ribitol 5-phosphate and the further reaction of D-ribitol 5-phosphate with CTP to form CDP-ribitol. This chain is Bifunctional ribulose 5-phosphate reductase/CDP-ribitol pyrophosphorylase Bcs1, found in Haemophilus influenzae.